Here is a 117-residue protein sequence, read N- to C-terminus: Large ribosomal subunit protein uL18 (117 aa).

This sequence belongs to the universal ribosomal protein uL18 family. Part of the 50S ribosomal subunit; part of the 5S rRNA/L5/L18/L25 subcomplex. Contacts the 5S and 23S rRNAs.

Functionally, this is one of the proteins that bind and probably mediate the attachment of the 5S RNA into the large ribosomal subunit, where it forms part of the central protuberance. The protein is Large ribosomal subunit protein uL18 of Azoarcus sp. (strain BH72).